Here is a 179-residue protein sequence, read N- to C-terminus: ATP synthase subunit delta (179 aa).

This sequence belongs to the ATPase delta chain family. F-type ATPases have 2 components, F(1) - the catalytic core - and F(0) - the membrane proton channel. F(1) has five subunits: alpha(3), beta(3), gamma(1), delta(1), epsilon(1). F(0) has three main subunits: a(1), b(2) and c(10-14). The alpha and beta chains form an alternating ring which encloses part of the gamma chain. F(1) is attached to F(0) by a central stalk formed by the gamma and epsilon chains, while a peripheral stalk is formed by the delta and b chains.

The protein localises to the cell membrane. Its function is as follows. F(1)F(0) ATP synthase produces ATP from ADP in the presence of a proton or sodium gradient. F-type ATPases consist of two structural domains, F(1) containing the extramembraneous catalytic core and F(0) containing the membrane proton channel, linked together by a central stalk and a peripheral stalk. During catalysis, ATP synthesis in the catalytic domain of F(1) is coupled via a rotary mechanism of the central stalk subunits to proton translocation. This protein is part of the stalk that links CF(0) to CF(1). It either transmits conformational changes from CF(0) to CF(1) or is implicated in proton conduction. This is ATP synthase subunit delta from Clostridium beijerinckii (strain ATCC 51743 / NCIMB 8052) (Clostridium acetobutylicum).